We begin with the raw amino-acid sequence, 354 residues long: Mycothiol acetyltransferase (354 aa).

A compositionally biased stretch (polar residues) spans 1 to 18; the sequence is MMVDNQTPDSSTLSTAST. The disordered stretch occupies residues 1 to 21; sequence MMVDNQTPDSSTLSTASTPVY. N-acetyltransferase domains lie at 21-176 and 191-354; these read YAEP…QTRE and LRMR…EPAA. Glu52 provides a ligand contact to 1D-myo-inositol 2-(L-cysteinylamino)-2-deoxy-alpha-D-glucopyranoside. 101–103 provides a ligand contact to acetyl-CoA; that stretch reads AAV. Residues Glu217, Lys259, and Glu274 each contribute to the 1D-myo-inositol 2-(L-cysteinylamino)-2-deoxy-alpha-D-glucopyranoside site. Acetyl-CoA-binding positions include 278–280 and 285–291; these read VGV and QGGGLGR. Position 318 (Tyr318) interacts with 1D-myo-inositol 2-(L-cysteinylamino)-2-deoxy-alpha-D-glucopyranoside.

This sequence belongs to the acetyltransferase family. MshD subfamily. As to quaternary structure, monomer.

The catalysed reaction is 1D-myo-inositol 2-(L-cysteinylamino)-2-deoxy-alpha-D-glucopyranoside + acetyl-CoA = mycothiol + CoA + H(+). Catalyzes the transfer of acetyl from acetyl-CoA to desacetylmycothiol (Cys-GlcN-Ins) to form mycothiol. The polypeptide is Mycothiol acetyltransferase (Rothia mucilaginosa (strain DY-18) (Stomatococcus mucilaginosus)).